We begin with the raw amino-acid sequence, 210 residues long: Homeobox protein Rhox5 (210 aa).

A disordered region spans residues 29 to 117; it reads KAEAFLQAGE…KNGKPEDRQM (89 aa). Positions 117–175 form a DNA-binding region, homeobox; atypical; the sequence is MPLQGSRFAQQRLSELQSILQRTNSFDVPREDLYRLMDTCVARVQNWFKIRRAAARRNR.

It is found in the nucleus. Functionally, transcription factor required for differentiation of embryonic stem cells (ESCs) into primordial germ cells. The chain is Homeobox protein Rhox5 (Rhox5) from Mus minutoides (Southern African pygmy mouse).